A 405-amino-acid polypeptide reads, in one-letter code: Enoyl-[acyl-carrier-protein] reductase [NADH] (405 aa).

NAD(+) is bound by residues 48-53 (GASSGY), 74-75 (FE), 111-112 (DA), and 140-141 (LA). Y226 contacts substrate. The active-site Proton donor is the Y236. Residues K245 and 274–276 (VVT) each bind NAD(+).

It belongs to the TER reductase family. Monomer.

It catalyses the reaction a 2,3-saturated acyl-[ACP] + NAD(+) = a (2E)-enoyl-[ACP] + NADH + H(+). It functions in the pathway lipid metabolism; fatty acid biosynthesis. In terms of biological role, involved in the final reduction of the elongation cycle of fatty acid synthesis (FAS II). Catalyzes the reduction of a carbon-carbon double bond in an enoyl moiety that is covalently linked to an acyl carrier protein (ACP). The polypeptide is Enoyl-[acyl-carrier-protein] reductase [NADH] (Xanthomonas oryzae pv. oryzae (strain PXO99A)).